Consider the following 635-residue polypeptide: 1-deoxy-D-xylulose-5-phosphate synthase (635 aa).

Thiamine diphosphate-binding positions include His-77 and 118–120 (GHA). Asp-150 provides a ligand contact to Mg(2+). Thiamine diphosphate contacts are provided by residues 151-152 (AS), Asn-179, Tyr-290, and Glu-372. Residue Asn-179 participates in Mg(2+) binding.

It belongs to the transketolase family. DXPS subfamily. As to quaternary structure, homodimer. It depends on Mg(2+) as a cofactor. The cofactor is thiamine diphosphate.

The catalysed reaction is D-glyceraldehyde 3-phosphate + pyruvate + H(+) = 1-deoxy-D-xylulose 5-phosphate + CO2. The protein operates within metabolic intermediate biosynthesis; 1-deoxy-D-xylulose 5-phosphate biosynthesis; 1-deoxy-D-xylulose 5-phosphate from D-glyceraldehyde 3-phosphate and pyruvate: step 1/1. In terms of biological role, catalyzes the acyloin condensation reaction between C atoms 2 and 3 of pyruvate and glyceraldehyde 3-phosphate to yield 1-deoxy-D-xylulose-5-phosphate (DXP). This is 1-deoxy-D-xylulose-5-phosphate synthase from Leptospira borgpetersenii serovar Hardjo-bovis (strain JB197).